Here is a 643-residue protein sequence, read N- to C-terminus: Sodium-dependent nutrient amino acid transporter 1 (643 aa).

A disordered region spans residues 1-38 (MELKGVQPSNGSPNGNGNGATNAASTEKTDAEKPTAER). The Cytoplasmic segment spans residues 1 to 40 (MELKGVQPSNGSPNGNGNGATNAASTEKTDAEKPTAERTN). Over residues 8–26 (PSNGSPNGNGNGATNAAST) the composition is skewed to low complexity. A compositionally biased stretch (basic and acidic residues) spans 27–36 (EKTDAEKPTA). A run of 3 helical transmembrane segments spans residues 41–61 (WGNG…LGNV), 74–94 (GAFL…MYYL), and 111–131 (SVVP…ICII). N-linked (GlcNAc...) asparagine glycans are attached at residues Asn-185, Asn-190, and Asn-200. The next 9 membrane-spanning stretches (helical) occupy residues 231 to 251 (PDWK…LVIM), 260 to 280 (AAYF…IRAV), 309 to 329 (AVVQ…MFAS), 343 to 363 (IVTT…FAIL), 403 to 423 (LFSV…IVAL), 449 to 469 (VCGF…ILTL), 476 to 496 (TYVV…VYGL), 518 to 538 (CWSF…MATI), and 554 to 574 (VAGW…GLWY).

This sequence belongs to the sodium:neurotransmitter symporter (SNF) (TC 2.A.22) family.

The protein localises to the membrane. Functionally, unusual broad substrate spectrum amino acid:sodium cotransporter that promotes absorption of the D isomers of essential amino acids. Neutral amino acids are the preferred substrates, especially methionine and phenylalanine. This Drosophila simulans (Fruit fly) protein is Sodium-dependent nutrient amino acid transporter 1.